The chain runs to 49 residues: MARFPEAEARLFNVKICMRCNARNPMKARVCRKCGYKGLRPKSKERKGR.

It belongs to the eukaryotic ribosomal protein eL40 family.

This chain is Large ribosomal subunit protein eL40, found in Archaeoglobus fulgidus (strain ATCC 49558 / DSM 4304 / JCM 9628 / NBRC 100126 / VC-16).